The sequence spans 148 residues: MLRKLAAVSLLSLLSAPLLAAECSVDIQGNDQMQFNTNAITVDKSCKQFTVNLSHPGNLPKNVMGHNWVLSTAADMQGVVTDGMASGLDKDYLKPDDSRVIAHTKLIGSGEKDSVTFDVSKLKEGEQYMFFCTFPGHSALMKGTLTLK.

A signal peptide spans 1–20 (MLRKLAAVSLLSLLSAPLLA). The Plastocyanin-like domain maps to 21–148 (AECSVDIQGN…ALMKGTLTLK (128 aa)). C23 and C46 are disulfide-bonded. Residues H66, C132, H137, and M141 each contribute to the Cu cation site.

It localises to the periplasm. Its function is as follows. Transfers electrons from cytochrome c551 to cytochrome oxidase. The polypeptide is Azurin (azu) (Pseudomonas aeruginosa (strain ATCC 15692 / DSM 22644 / CIP 104116 / JCM 14847 / LMG 12228 / 1C / PRS 101 / PAO1)).